The primary structure comprises 361 residues: Phospho-N-acetylmuramoyl-pentapeptide-transferase (361 aa).

Helical transmembrane passes span 25–45 (RTVL…PAMI), 73–93 (TMGG…WADL), 97–117 (YVWI…VDDY), 134–154 (LFWQ…TAEL), 168–188 (VAVP…IVGT), 200–220 (GLAI…SYVA), 237–257 (AGEL…FLWF), 264–284 (VFMG…VTVI), 289–309 (IVML…MLQV), and 338–358 (QVVV…LSSL).

Belongs to the glycosyltransferase 4 family. MraY subfamily. Mg(2+) is required as a cofactor.

It localises to the cell inner membrane. The enzyme catalyses UDP-N-acetyl-alpha-D-muramoyl-L-alanyl-gamma-D-glutamyl-meso-2,6-diaminopimeloyl-D-alanyl-D-alanine + di-trans,octa-cis-undecaprenyl phosphate = di-trans,octa-cis-undecaprenyl diphospho-N-acetyl-alpha-D-muramoyl-L-alanyl-D-glutamyl-meso-2,6-diaminopimeloyl-D-alanyl-D-alanine + UMP. Its pathway is cell wall biogenesis; peptidoglycan biosynthesis. Catalyzes the initial step of the lipid cycle reactions in the biosynthesis of the cell wall peptidoglycan: transfers peptidoglycan precursor phospho-MurNAc-pentapeptide from UDP-MurNAc-pentapeptide onto the lipid carrier undecaprenyl phosphate, yielding undecaprenyl-pyrophosphoryl-MurNAc-pentapeptide, known as lipid I. In Nitrosospira multiformis (strain ATCC 25196 / NCIMB 11849 / C 71), this protein is Phospho-N-acetylmuramoyl-pentapeptide-transferase.